The primary structure comprises 559 residues: NXPE family member 2 (559 aa).

The helical transmembrane segment at 17–37 threads the bilayer; that stretch reads AIARKLLLMLTFILIFWIIYL.

The protein belongs to the NXPE family.

Its subcellular location is the membrane. The sequence is that of NXPE family member 2 (NXPE2) from Homo sapiens (Human).